A 119-amino-acid chain; its full sequence is Phosphoribosyl-AMP cyclohydrolase (119 aa).

D77 serves as a coordination point for Mg(2+). C78 provides a ligand contact to Zn(2+). Mg(2+) is bound by residues D79 and D81. Residues C94 and C101 each contribute to the Zn(2+) site.

This sequence belongs to the PRA-CH family. Homodimer. Mg(2+) is required as a cofactor. The cofactor is Zn(2+).

It is found in the cytoplasm. It catalyses the reaction 1-(5-phospho-beta-D-ribosyl)-5'-AMP + H2O = 1-(5-phospho-beta-D-ribosyl)-5-[(5-phospho-beta-D-ribosylamino)methylideneamino]imidazole-4-carboxamide. It participates in amino-acid biosynthesis; L-histidine biosynthesis; L-histidine from 5-phospho-alpha-D-ribose 1-diphosphate: step 3/9. Functionally, catalyzes the hydrolysis of the adenine ring of phosphoribosyl-AMP. This Ruegeria pomeroyi (strain ATCC 700808 / DSM 15171 / DSS-3) (Silicibacter pomeroyi) protein is Phosphoribosyl-AMP cyclohydrolase.